The sequence spans 319 residues: Annexin A4 (319 aa).

The residue at position 2 (Ala2) is an N-acetylalanine. A Phosphothreonine modification is found at Thr7. Ser12 carries the phosphoserine modification. Annexin repeat units follow at residues Phe14–Thr85, Pro86–Ala157, Ala169–Lys241, and Asn245–Gly316. Lys213, Lys293, and Lys300 each carry N6-acetyllysine.

Belongs to the annexin family. As to expression, expressed in pancreas (at protein level). Also detected in liver, spleen, intestine, stomach, kidney, and adrenal glands.

The protein resides in the zymogen granule membrane. Calcium/phospholipid-binding protein which promotes membrane fusion and is involved in exocytosis. The protein is Annexin A4 (ANXA4) of Canis lupus familiaris (Dog).